The sequence spans 247 residues: MGQKIHPHGLRLGITSEWRSRWYADKQYADYLAEDIKIRDFLSEGLDRAGIANVVIERTHDRVRVDIHTARPGIVIGRRGSEADRIRGQLEKLTGKQVQLNILEVKNIDANAQLVAQSIAEQLTNRVAFRRAMRKAIQGAMRQPQVKGIKVVCSGRLGGAEMGRTERYHEGRVPLHTLRAEIDYGTYEAHTTFGRIGVKVWIYKGDVVGGRRESLMNARDERPSRGRRERPRRGGARRQRAEQKQEG.

The 69-residue stretch at 38-106 (IRDFLSEGLD…QVQLNILEVK (69 aa)) folds into the KH type-2 domain. Positions 214–226 (SLMNARDERPSRG) are enriched in basic and acidic residues. A disordered region spans residues 214–247 (SLMNARDERPSRGRRERPRRGGARRQRAEQKQEG). A compositionally biased stretch (basic residues) spans 227-238 (RRERPRRGGARR).

It belongs to the universal ribosomal protein uS3 family. As to quaternary structure, part of the 30S ribosomal subunit. Forms a tight complex with proteins S10 and S14.

Functionally, binds the lower part of the 30S subunit head. Binds mRNA in the 70S ribosome, positioning it for translation. This chain is Small ribosomal subunit protein uS3, found in Corynebacterium jeikeium (strain K411).